A 99-amino-acid chain; its full sequence is Large ribosomal subunit protein bL27 (99 aa).

Positions 1 to 21 are disordered; the sequence is MAHKKGGGSTRNGRDSRAKRL.

It belongs to the bacterial ribosomal protein bL27 family.

The sequence is that of Large ribosomal subunit protein bL27 from Thermomicrobium roseum (strain ATCC 27502 / DSM 5159 / P-2).